A 126-amino-acid chain; its full sequence is Histone H2B type 1-O (126 aa).

Residues 1-12 (MPDPAKSAPAPK) are compositionally biased toward low complexity. Residues 1–35 (MPDPAKSAPAPKKGSKKAVTKAQKKDGKKRKRSRK) form a disordered region. Proline 2 is modified (N-acetylproline; partial). N6-(2-hydroxyisobutyryl)lysine; alternate is present on lysine 6. Lysine 6 carries the post-translational modification N6-(beta-hydroxybutyryl)lysine; alternate. Lysine 6 is subject to N6-acetyllysine; alternate. N6-butyryllysine; alternate is present on lysine 6. Lysine 6 is modified (N6-crotonyllysine; alternate). Lysine 6 carries the post-translational modification N6-lactoyllysine; alternate. Residue lysine 6 forms a Glycyl lysine isopeptide (Lys-Gly) (interchain with G-Cter in SUMO2); alternate linkage. ADP-ribosylserine is present on serine 7. Lysine 12 carries the post-translational modification N6-(beta-hydroxybutyryl)lysine; alternate. An N6-acetyllysine; alternate mark is found at lysine 12 and lysine 13. 2 positions are modified to N6-crotonyllysine; alternate: lysine 12 and lysine 13. N6-lactoyllysine; alternate is present on lysine 12. At lysine 13 the chain carries N6-(2-hydroxyisobutyryl)lysine; alternate. Serine 15 is modified (phosphoserine; by STK4/MST1). N6-acetyllysine; alternate is present on residues lysine 16, lysine 17, lysine 21, and lysine 24. Lysine 16, lysine 17, lysine 21, and lysine 24 each carry N6-crotonyllysine; alternate. Residues lysine 16, lysine 17, lysine 21, and lysine 24 each carry the N6-lactoyllysine; alternate modification. N6-(beta-hydroxybutyryl)lysine; alternate occurs at positions 17 and 21. An N6-glutaryllysine; alternate modification is found at lysine 17. N6-(2-hydroxyisobutyryl)lysine; alternate occurs at positions 21 and 24. Residue lysine 21 is modified to N6-butyryllysine; alternate. A Glycyl lysine isopeptide (Lys-Gly) (interchain with G-Cter in SUMO2); alternate cross-link involves residue lysine 21. Lysine 25 is subject to N6-(2-hydroxyisobutyryl)lysine. Lysine 35 carries the N6-(2-hydroxyisobutyryl)lysine; alternate modification. Lysine 35 carries the post-translational modification N6-(beta-hydroxybutyryl)lysine; alternate. Position 35 is an N6-crotonyllysine; alternate (lysine 35). N6-glutaryllysine; alternate is present on lysine 35. An N6-succinyllysine; alternate modification is found at lysine 35. Residue lysine 35 forms a Glycyl lysine isopeptide (Lys-Gly) (interchain with G-Cter in ubiquitin); alternate linkage. A PolyADP-ribosyl glutamic acid modification is found at glutamate 36. Position 37 is a phosphoserine; by AMPK (serine 37). Lysine 44, lysine 47, and lysine 58 each carry N6-(2-hydroxyisobutyryl)lysine; alternate. N6-lactoyllysine; alternate is present on lysine 44. N6-glutaryllysine; alternate is present on residues lysine 44 and lysine 47. N6-methyllysine; alternate is present on lysine 47. The residue at position 58 (lysine 58) is an N6,N6-dimethyllysine; alternate. Arginine 80 is subject to Dimethylated arginine. Lysine 86 is modified (N6-(2-hydroxyisobutyryl)lysine; alternate). At lysine 86 the chain carries N6-(beta-hydroxybutyryl)lysine; alternate. N6-acetyllysine; alternate is present on lysine 86. The residue at position 86 (lysine 86) is an N6-lactoyllysine; alternate. The residue at position 86 (lysine 86) is an N6,N6,N6-trimethyllysine; alternate. 2 positions are modified to omega-N-methylarginine: arginine 87 and arginine 93. Lysine 109 bears the N6-(2-hydroxyisobutyryl)lysine; alternate mark. Lysine 109 is subject to N6-lactoyllysine; alternate. Lysine 109 is modified (N6-glutaryllysine; alternate). Position 109 is an N6-methyllysine; alternate (lysine 109). The O-linked (GlcNAc) serine glycan is linked to serine 113. At threonine 116 the chain carries Phosphothreonine. An N6-(2-hydroxyisobutyryl)lysine; alternate mark is found at lysine 117 and lysine 121. An N6-(beta-hydroxybutyryl)lysine; alternate mark is found at lysine 117 and lysine 121. An N6-lactoyllysine; alternate mark is found at lysine 117 and lysine 121. 2 positions are modified to N6-glutaryllysine; alternate: lysine 117 and lysine 121. N6-succinyllysine; alternate is present on residues lysine 117 and lysine 121. Lysine 117 carries the post-translational modification N6-malonyllysine; alternate. Residue lysine 117 is modified to N6-methylated lysine; alternate. Lysine 121 participates in a covalent cross-link: Glycyl lysine isopeptide (Lys-Gly) (interchain with G-Cter in ubiquitin); alternate.

This sequence belongs to the histone H2B family. The nucleosome is a histone octamer containing two molecules each of H2A, H2B, H3 and H4 assembled in one H3-H4 heterotetramer and two H2A-H2B heterodimers. The octamer wraps approximately 147 bp of DNA. Post-translationally, monoubiquitination at Lys-35 (H2BK34Ub) by the MSL1/MSL2 dimer is required for histone H3 'Lys-4' (H3K4me) and 'Lys-79' (H3K79me) methylation and transcription activation at specific gene loci, such as HOXA9 and MEIS1 loci. Similarly, monoubiquitination at Lys-121 (H2BK120Ub) by the RNF20/40 complex gives a specific tag for epigenetic transcriptional activation and is also prerequisite for histone H3 'Lys-4' and 'Lys-79' methylation. It also functions cooperatively with the FACT dimer to stimulate elongation by RNA polymerase II. H2BK120Ub also acts as a regulator of mRNA splicing: deubiquitination by USP49 is required for efficient cotranscriptional splicing of a large set of exons. In terms of processing, phosphorylation at Ser-37 (H2BS36ph) by AMPK in response to stress promotes transcription. Phosphorylated on Ser-15 (H2BS14ph) by STK4/MST1 during apoptosis; which facilitates apoptotic chromatin condensation. Also phosphorylated on Ser-15 in response to DNA double strand breaks (DSBs), and in correlation with somatic hypermutation and immunoglobulin class-switch recombination. GlcNAcylation at Ser-113 promotes monoubiquitination of Lys-121. It fluctuates in response to extracellular glucose, and associates with transcribed genes. Post-translationally, ADP-ribosylated by PARP1 or PARP2 on Ser-7 (H2BS6ADPr) in response to DNA damage. H2BS6ADPr promotes recruitment of CHD1L. Poly ADP-ribosylation on Glu-36 (H2BE35ADPr) by PARP1 regulates adipogenesis: it inhibits phosphorylation at Ser-37 (H2BS36ph), thereby blocking expression of pro-adipogenetic genes. In terms of processing, crotonylation (Kcr) is specifically present in male germ cells and marks testis-specific genes in post-meiotic cells, including X-linked genes that escape sex chromosome inactivation in haploid cells. Crotonylation marks active promoters and enhancers and confers resistance to transcriptional repressors. It is also associated with post-meiotically activated genes on autosomes. Lactylated in macrophages by EP300/P300 by using lactoyl-CoA directly derived from endogenous or exogenous lactate, leading to stimulates gene transcription.

The protein resides in the nucleus. Its subcellular location is the chromosome. Functionally, core component of nucleosome. Nucleosomes wrap and compact DNA into chromatin, limiting DNA accessibility to the cellular machineries which require DNA as a template. Histones thereby play a central role in transcription regulation, DNA repair, DNA replication and chromosomal stability. DNA accessibility is regulated via a complex set of post-translational modifications of histones, also called histone code, and nucleosome remodeling. The chain is Histone H2B type 1-O from Homo sapiens (Human).